The chain runs to 1300 residues: uncharacterized protein (1300 aa).

The interval 1 to 1205 (MVLLRSGLGT…GKTLGLDPLY (1205 aa)) is disordered. Basic residues predominate over residues 51–69 (GRKRKKGPKKSGGKKKKRK). Positions 73–143 (EGPGGGEGPG…GPGGGEGPGG (71 aa)) are enriched in gly residues. A compositionally biased stretch (basic residues) spans 145 to 165 (SRKRKRGDGSKKHGGKKKKKT). The span at 237-246 (PDGPGAQEGP) shows a compositional bias: low complexity. Over residues 250 to 270 (EGPEGDEGPEGPEGPEGEGPE) the composition is skewed to acidic residues. Over residues 280-289 (PDGPGAQEGP) the composition is skewed to low complexity. Composition is skewed to acidic residues over residues 295–343 (PDED…DSPD) and 357–417 (PDED…EGDS). The segment covering 418–427 (PDGPGAQEGP) has biased composition (low complexity). 4 stretches are compositionally biased toward acidic residues: residues 431 to 469 (EGPEGEGPEGLEGPEGEGPEGPEGPEGEGPEGPEGPEGE), 477 to 494 (PEGEGPEGPEGPEGEGPE), 517 to 558 (EGPE…EGPE), and 581 to 630 (EGPE…EGDS). The span at 674–686 (SGPGSSEGEGPSG) shows a compositional bias: gly residues. Acidic residues-rich tracts occupy residues 713-726 (PDEDGDPEGPDGTE), 736-749 (PDEDGDPEGPDGTE), 759-772 (PDEDGDPEESEGTE), and 820-883 (SDDE…EEEV). Over residues 903-917 (GEEKGEGEKGKGREE) the composition is skewed to basic and acidic residues. Gly residues-rich tracts occupy residues 922–1010 (GGEG…GEGG) and 1021–1031 (GGEGGEGGEGG). Basic residues predominate over residues 1183 to 1195 (RPPKHHPQTKRAQ).

This is an uncharacterized protein from Connochaetes taurinus (Blue wildebeest).